A 308-amino-acid chain; its full sequence is MITFLPIIFSILVVVTFVIGNCANGFIALVNSTEWVKRQKISFADQILTALAVSRVGLLWVLLLNWYATVLNPAFYSVEVRTIVYNLWAVINHFSNWLATSLSIFYLLKIANFSNLIFLHLKRRVKSVVLVILLGPLLFLVCHLFVVNMNEIVRTKEYEGNMTWKSKLRSAMYLSNTTVTILANLVPFILTLISFLLLICSLCKHLKKMQLRDKGSQDPSTKVHIKALQTVISLLLCVIYFLSIMISSWSLGRVENKAVFMFCKAIRFSYPSAHAFILIWGNKKLKQTLLSVLWNVRYCVKGQKLPSP.

A topological domain (extracellular) is located at residue Met1. The chain crosses the membrane as a helical span at residues 2-22; sequence ITFLPIIFSILVVVTFVIGNC. The Cytoplasmic portion of the chain corresponds to 23 to 46; that stretch reads ANGFIALVNSTEWVKRQKISFADQ. A helical transmembrane segment spans residues 47–67; sequence ILTALAVSRVGLLWVLLLNWY. The Extracellular portion of the chain corresponds to 68–86; the sequence is ATVLNPAFYSVEVRTIVYN. The chain crosses the membrane as a helical span at residues 87–107; it reads LWAVINHFSNWLATSLSIFYL. Residues 108-126 lie on the Cytoplasmic side of the membrane; that stretch reads LKIANFSNLIFLHLKRRVK. A helical membrane pass occupies residues 127–147; the sequence is SVVLVILLGPLLFLVCHLFVV. The Extracellular portion of the chain corresponds to 148–178; sequence NMNEIVRTKEYEGNMTWKSKLRSAMYLSNTT. Residues Asn161 and Asn176 are each glycosylated (N-linked (GlcNAc...) asparagine). Residues 179 to 199 form a helical membrane-spanning segment; that stretch reads VTILANLVPFILTLISFLLLI. The Cytoplasmic segment spans residues 200–229; that stretch reads CSLCKHLKKMQLRDKGSQDPSTKVHIKALQ. A helical membrane pass occupies residues 230-249; that stretch reads TVISLLLCVIYFLSIMISSW. At 250–258 the chain is on the extracellular side; that stretch reads SLGRVENKA. Residues 259 to 279 form a helical membrane-spanning segment; that stretch reads VFMFCKAIRFSYPSAHAFILI. Over 280 to 308 the chain is Cytoplasmic; it reads WGNKKLKQTLLSVLWNVRYCVKGQKLPSP.

It belongs to the G-protein coupled receptor T2R family.

It is found in the membrane. It localises to the cell projection. Its subcellular location is the cilium membrane. Gustducin-coupled receptor immplicated in the perception of bitter compounds in the oral cavity and the gastrointestinal tract. Signals through PLCB2 and the calcium-regulated cation channel TRPM5. Activated by the sulfonyl amide sweeteners saccharin and acesulfame K. In airway epithelial cells, binding of bitter compounds increases the intracellular calcium ion concentration and stimulates ciliary beat frequency. May act as chemosensory receptors in airway epithelial cells to detect and eliminate potential noxious agents from the airways. The polypeptide is Taste receptor type 2 member 43 (TAS2R43) (Papio hamadryas (Hamadryas baboon)).